The chain runs to 233 residues: Glucosamine-6-phosphate deaminase (233 aa).

Aspartate 62 serves as the catalytic Proton acceptor; for enolization step. The For ring-opening step role is filled by asparagine 128. The active-site Proton acceptor; for ring-opening step is histidine 130. Glutamate 135 serves as the catalytic For ring-opening step.

The protein belongs to the glucosamine/galactosamine-6-phosphate isomerase family. NagB subfamily.

The catalysed reaction is alpha-D-glucosamine 6-phosphate + H2O = beta-D-fructose 6-phosphate + NH4(+). The protein operates within amino-sugar metabolism; N-acetylneuraminate degradation; D-fructose 6-phosphate from N-acetylneuraminate: step 5/5. Its function is as follows. Catalyzes the reversible isomerization-deamination of glucosamine 6-phosphate (GlcN6P) to form fructose 6-phosphate (Fru6P) and ammonium ion. In Streptococcus pneumoniae serotype 4 (strain ATCC BAA-334 / TIGR4), this protein is Glucosamine-6-phosphate deaminase.